Reading from the N-terminus, the 75-residue chain is Large ribosomal subunit protein bL31 (75 aa).

Residues cysteine 16, cysteine 18, cysteine 36, and cysteine 39 each coordinate Zn(2+).

It belongs to the bacterial ribosomal protein bL31 family. Type A subfamily. As to quaternary structure, part of the 50S ribosomal subunit. The cofactor is Zn(2+).

Its function is as follows. Binds the 23S rRNA. In Desulforapulum autotrophicum (strain ATCC 43914 / DSM 3382 / VKM B-1955 / HRM2) (Desulfobacterium autotrophicum), this protein is Large ribosomal subunit protein bL31.